Reading from the N-terminus, the 55-residue chain is Neurotoxin X-29S (55 aa).

Residues 1–23 (MKIFFAVLVILVLFSMLIWTAYG) form the signal peptide. 3 cysteine pairs are disulfide-bonded: Cys-30–Cys-45, Cys-36–Cys-50, and Cys-39–Cys-53.

As to expression, expressed by the venom gland.

It localises to the secreted. This chain is Neurotoxin X-29S, found in Olivierus martensii (Manchurian scorpion).